The sequence spans 390 residues: Isoaspartyl dipeptidase (390 aa).

Zn(2+) is bound by residues H68 and H70. Residues 75 to 77 (GGE), T106, and Y137 contribute to the substrate site. K162 lines the Zn(2+) pocket. At K162 the chain carries N6-carboxylysine. A substrate-binding site is contributed by R169. H201 and H230 together coordinate Zn(2+). Residue R233 coordinates substrate. D285 lines the Zn(2+) pocket. D285 serves as the catalytic Proton acceptor. S289 provides a ligand contact to substrate.

The protein belongs to the peptidase M38 family. Zn(2+) is required as a cofactor. Requires Co(2+) as cofactor. Post-translationally, carboxylation allows a single lysine to coordinate two zinc ions.

It is found in the cytoplasm. P-hydroxymercuribenzoate causes a slight inhibition (8 to 17 %). Iodoacetamide, o-iodosobenzoate and ammonium persulfate do not inhibit the enzyme activity. Its function is as follows. Catalyzes the hydrolytic cleavage of a subset of L-isoaspartyl (L-beta-aspartyl) dipeptides. Used to degrade proteins damaged by L-isoaspartyl residues formation. The best substrate for the enzyme reported thus far is iso-Asp-Leu. In Escherichia coli (strain K12), this protein is Isoaspartyl dipeptidase (iadA).